The primary structure comprises 169 residues: Lipoprotein signal peptidase (169 aa).

A run of 4 helical transmembrane segments spans residues 4–24 (PICS…ILDI), 29–49 (WVMA…FNLT), 70–90 (WFFA…MYRS), and 101–121 (YALI…HGAV). Active-site residues include D123 and D141. Residues 137 to 157 (FNLADVAICIGAALVIFEGFL) traverse the membrane as a helical segment.

Belongs to the peptidase A8 family.

It is found in the cell inner membrane. The enzyme catalyses Release of signal peptides from bacterial membrane prolipoproteins. Hydrolyzes -Xaa-Yaa-Zaa-|-(S,diacylglyceryl)Cys-, in which Xaa is hydrophobic (preferably Leu), and Yaa (Ala or Ser) and Zaa (Gly or Ala) have small, neutral side chains.. It functions in the pathway protein modification; lipoprotein biosynthesis (signal peptide cleavage). In terms of biological role, this protein specifically catalyzes the removal of signal peptides from prolipoproteins. The protein is Lipoprotein signal peptidase of Yersinia pestis bv. Antiqua (strain Antiqua).